Consider the following 330-residue polypeptide: Ketol-acid reductoisomerase (NADP(+)) (330 aa).

A KARI N-terminal Rossmann domain is found at 1 to 181 (MKVFYDSDFK…GLSRAGVIQT (181 aa)). Residues 24–27 (YGSQ), R47, S52, and 82–85 (DELQ) each bind NADP(+). H107 is a catalytic residue. G133 serves as a coordination point for NADP(+). The region spanning 182-327 (TFKEETETDL…AKLRKMCGLE (146 aa)) is the KARI C-terminal knotted domain. 4 residues coordinate Mg(2+): D190, E194, E226, and E230. S251 provides a ligand contact to substrate.

The protein belongs to the ketol-acid reductoisomerase family. Mg(2+) is required as a cofactor.

The enzyme catalyses (2R)-2,3-dihydroxy-3-methylbutanoate + NADP(+) = (2S)-2-acetolactate + NADPH + H(+). The catalysed reaction is (2R,3R)-2,3-dihydroxy-3-methylpentanoate + NADP(+) = (S)-2-ethyl-2-hydroxy-3-oxobutanoate + NADPH + H(+). It functions in the pathway amino-acid biosynthesis; L-isoleucine biosynthesis; L-isoleucine from 2-oxobutanoate: step 2/4. Its pathway is amino-acid biosynthesis; L-valine biosynthesis; L-valine from pyruvate: step 2/4. In terms of biological role, involved in the biosynthesis of branched-chain amino acids (BCAA). Catalyzes an alkyl-migration followed by a ketol-acid reduction of (S)-2-acetolactate (S2AL) to yield (R)-2,3-dihydroxy-isovalerate. In the isomerase reaction, S2AL is rearranged via a Mg-dependent methyl migration to produce 3-hydroxy-3-methyl-2-ketobutyrate (HMKB). In the reductase reaction, this 2-ketoacid undergoes a metal-dependent reduction by NADPH to yield (R)-2,3-dihydroxy-isovalerate. This chain is Ketol-acid reductoisomerase (NADP(+)), found in Methanococcus maripaludis (strain C5 / ATCC BAA-1333).